The chain runs to 112 residues: Histone H3-4 (112 aa).

The disordered stretch occupies residues 1–31 (QTGAKAPRKALANKAARKTAPADGGVKKPHR).

The protein belongs to the histone H3 family. In terms of assembly, the nucleosome is a histone octamer containing two molecules each of H2A, H2B, H3 and H4 assembled in one H3-H4 heterotetramer and two H2A-H2B heterodimers. The octamer wraps approximately 147 bp of DNA.

It localises to the nucleus. Its subcellular location is the chromosome. Core component of nucleosome. Nucleosomes wrap and compact DNA into chromatin, limiting DNA accessibility to the cellular machineries which require DNA as a template. Histones thereby play a central role in transcription regulation, DNA repair, DNA replication and chromosomal stability. DNA accessibility is regulated via a complex set of post-translational modifications of histones, also called histone code, and nucleosome remodeling. The sequence is that of Histone H3-4 (H3-4) from Stylonychia lemnae (Ciliate).